The following is a 157-amino-acid chain: Ribosomal RNA large subunit methyltransferase H (157 aa).

S-adenosyl-L-methionine contacts are provided by residues Leu-73, Gly-105, and 124-129; that span reads LSKMTF.

It belongs to the RNA methyltransferase RlmH family. As to quaternary structure, homodimer.

The protein localises to the cytoplasm. It catalyses the reaction pseudouridine(1915) in 23S rRNA + S-adenosyl-L-methionine = N(3)-methylpseudouridine(1915) in 23S rRNA + S-adenosyl-L-homocysteine + H(+). Its function is as follows. Specifically methylates the pseudouridine at position 1915 (m3Psi1915) in 23S rRNA. This Parabacteroides distasonis (strain ATCC 8503 / DSM 20701 / CIP 104284 / JCM 5825 / NCTC 11152) protein is Ribosomal RNA large subunit methyltransferase H.